Reading from the N-terminus, the 407-residue chain is Myeloid cell nuclear differentiation antigen (407 aa).

Residues 1–88 (MANEYKKILL…VNNLRKERSK (88 aa)) enclose the Pyrin domain. The interval 122-211 (LTSEVGERIP…TRRNVPQKDP (90 aa)) is disordered. The Nuclear localization signal motif lies at 131 to 137 (PVAQKRK). Residues 177-199 (HTSSSTPSNTSFAQNQQTQAQCQ) show a composition bias toward low complexity. Residues 196–394 (AQCQVDTRRN…CGSHSFIKVI (199 aa)) enclose the HIN-200 domain.

As to quaternary structure, participates in a ternary complex with YY1 and the YY1 target DNA element. Binds nucleolin and nucleophosmin/NPM/B23.

Its subcellular location is the nucleus. The protein localises to the cytoplasm. In terms of biological role, may act as a transcriptional activator/repressor in the myeloid lineage. Plays a role in the granulocyte/monocyte cell-specific response to interferon. Stimulates the DNA binding of the transcriptional repressor protein YY1. The chain is Myeloid cell nuclear differentiation antigen (MNDA) from Macaca fascicularis (Crab-eating macaque).